The following is a 67-amino-acid chain: Minor structural pilin EpdD (67 aa).

Positions 1–13 (MSVALKKFFSKRG) are excised as a propeptide. A QXSXEXXXL motif is present at residues 14 to 22 (QLSLEFSVL).

In terms of processing, the N-terminus is cleaved by the prepilin peptidase EppA, which recognizes the class III signal sequence. N-glycosylated. Glycosylation is AglB-dependent. The N-glycosylation does not occur unless the signal peptide has been cleaved first.

The protein resides in the secreted. Its subcellular location is the cell surface. The protein localises to the fimbrium. Minor component of the type IV-like pili. Essential for pili formation. The sequence is that of Minor structural pilin EpdD from Methanococcus maripaludis (strain DSM 14266 / JCM 13030 / NBRC 101832 / S2 / LL).